A 160-amino-acid chain; its full sequence is MIP18 family protein F45G2.10 (160 aa).

Residues 1-32 (MGQERLDNANPTLFDSKPRHRPVTGTERDESV) are disordered.

This sequence belongs to the MIP18 family.

Its function is as follows. May play a role in chromosome segregation through establishment of sister chromatid cohesion. In Caenorhabditis elegans, this protein is MIP18 family protein F45G2.10.